The primary structure comprises 151 residues: MAEVPADSRGATYLGFDFGERNIGVAVGQSVTGTAAPLRTLRAQPSARLWAAISELIDQWLPAGLVVGLSHQQDGSENPITAPTLRFCRQLEGRYRLPVYTVDETLTTAESRTHFYQRRRRKSVEFEQVKDEMAAQLILQTWFSIDKASPR.

It belongs to the YqgF nuclease family.

Its subcellular location is the cytoplasm. Its function is as follows. Could be a nuclease involved in processing of the 5'-end of pre-16S rRNA. The protein is Putative pre-16S rRNA nuclease of Methylococcus capsulatus (strain ATCC 33009 / NCIMB 11132 / Bath).